A 517-amino-acid polypeptide reads, in one-letter code: Glutamate--tRNA ligase (517 aa).

Residues 14-24 (PSPTGPLHIGG) carry the 'HIGH' region motif. Residues 266–270 (KLSKR) carry the 'KMSKS' region motif. Lys269 contacts ATP.

This sequence belongs to the class-I aminoacyl-tRNA synthetase family. Glutamate--tRNA ligase type 1 subfamily. In terms of assembly, monomer.

Its subcellular location is the cytoplasm. The enzyme catalyses tRNA(Glu) + L-glutamate + ATP = L-glutamyl-tRNA(Glu) + AMP + diphosphate. Its function is as follows. Catalyzes the attachment of glutamate to tRNA(Glu) in a two-step reaction: glutamate is first activated by ATP to form Glu-AMP and then transferred to the acceptor end of tRNA(Glu). The protein is Glutamate--tRNA ligase of Cytophaga hutchinsonii (strain ATCC 33406 / DSM 1761 / CIP 103989 / NBRC 15051 / NCIMB 9469 / D465).